The sequence spans 141 residues: Small ribosomal subunit protein uS12 (141 aa).

Position 102 is a 3-methylthioaspartic acid (D102). Residues 115–141 (GDASGVEKRRQQRSLYGAKRPKKEASK) form a disordered region.

This sequence belongs to the universal ribosomal protein uS12 family. In terms of assembly, part of the 30S ribosomal subunit. Contacts proteins S8 and S17. May interact with IF1 in the 30S initiation complex.

Its function is as follows. With S4 and S5 plays an important role in translational accuracy. Interacts with and stabilizes bases of the 16S rRNA that are involved in tRNA selection in the A site and with the mRNA backbone. Located at the interface of the 30S and 50S subunits, it traverses the body of the 30S subunit contacting proteins on the other side and probably holding the rRNA structure together. The combined cluster of proteins S8, S12 and S17 appears to hold together the shoulder and platform of the 30S subunit. In Ureaplasma parvum serovar 3 (strain ATCC 27815 / 27 / NCTC 11736), this protein is Small ribosomal subunit protein uS12.